We begin with the raw amino-acid sequence, 269 residues long: Staphylococcal secretory antigen ssaA2 (269 aa).

The N-terminal stretch at 1–27 (MKKIATATIATAGFATIAIASGNQAHA) is a signal peptide. Repeat copies occupy residues 83-85 (YNN), 88-90 (YNN), 91-93 (YNN), 97-99 (YNN), 103-105 (YNN), 106-108 (YSN), and 115-117 (YNN). The 7 X 3 AA repeats of Y-[NS]-N stretch occupies residues 83–115 (YNNYSYNNYNNGYSYNNYSRYNNYSNNNQSYNY). The Peptidase C51 domain occupies 148-269 (MAPSSNGRSI…SQAAGYNFIH (122 aa)).

Its subcellular location is the secreted. Functionally, not known; immunogenic protein. This Staphylococcus aureus (strain MRSA252) protein is Staphylococcal secretory antigen ssaA2 (ssaA2).